A 326-amino-acid polypeptide reads, in one-letter code: tRNA U34 carboxymethyltransferase (326 aa).

Carboxy-S-adenosyl-L-methionine contacts are provided by residues K95, W109, K114, G134, 184–185 (VE), Y204, and R319.

The protein belongs to the class I-like SAM-binding methyltransferase superfamily. CmoB family.

The catalysed reaction is carboxy-S-adenosyl-L-methionine + 5-hydroxyuridine(34) in tRNA = 5-carboxymethoxyuridine(34) in tRNA + S-adenosyl-L-homocysteine + H(+). Its function is as follows. Catalyzes carboxymethyl transfer from carboxy-S-adenosyl-L-methionine (Cx-SAM) to 5-hydroxyuridine (ho5U) to form 5-carboxymethoxyuridine (cmo5U) at position 34 in tRNAs. This chain is tRNA U34 carboxymethyltransferase, found in Trichodesmium erythraeum (strain IMS101).